The chain runs to 207 residues: Ribonuclease HII (207 aa).

Positions glycine 12–histidine 205 constitute an RNase H type-2 domain. A divalent metal cation-binding residues include aspartate 18, glutamate 19, and aspartate 114.

The protein belongs to the RNase HII family. Mn(2+) serves as cofactor. Requires Mg(2+) as cofactor.

The protein localises to the cytoplasm. It catalyses the reaction Endonucleolytic cleavage to 5'-phosphomonoester.. In terms of biological role, endonuclease that specifically degrades the RNA of RNA-DNA hybrids. In Gluconobacter oxydans (strain 621H) (Gluconobacter suboxydans), this protein is Ribonuclease HII.